The following is a 170-amino-acid chain: Photosystem I assembly protein Ycf3 (170 aa).

3 TPR repeats span residues 35 to 68 (AFTYYRDGMLAQSEGNYAEALQNYYEATRLEIDP), 72 to 105 (SYILYNIGLIHTSNGEHTKALEYYFRALERNPFL), and 120 to 153 (GEQAILQGDSEIAEAWFDQAAEYWKQAIALTPGN).

It belongs to the Ycf3 family.

It localises to the plastid. It is found in the chloroplast thylakoid membrane. Essential for the assembly of the photosystem I (PSI) complex. May act as a chaperone-like factor to guide the assembly of the PSI subunits. In Agrostis stolonifera (Creeping bentgrass), this protein is Photosystem I assembly protein Ycf3.